The primary structure comprises 328 residues: MNDQWYKHLIGARTIKTGIAIFLTAVFCMALDLTPIYAILTAVVTIEPTAKASLIKGYRRLPATVIGAGFAVLFTYLFGDQSPFTYALSATFTILFCTKLKLQVGTNVAVLTSLAMIPGIHDAYIFNFLSRTLTAIIGLVTSGLINFMVFPPKYYGQVEEKLSKTDALMYKLFYNRCQELILSRLQSDKSEKAYKNIFNLNNQVETLISYQRDELSYHKKKECDWKLLNQLTKRAYTNRLFITHLSNIIYLPKNTRVNFSGDEKMALLKISSSIKDIFYDGSFKREDDSVETLRSTIKALEISGENQIKSHILYEVLMIYRLLDSRYA.

4 helical membrane-spanning segments follow: residues 19–39 (IAIFLTAVFCMALDLTPIYAI), 61–81 (LPATVIGAGFAVLFTYLFGDQ), 108–128 (VAVLTSLAMIPGIHDAYIFNF), and 132–152 (TLTAIIGLVTSGLINFMVFPP).

This sequence belongs to the UPF0421 family.

Its subcellular location is the cell membrane. The protein is UPF0421 protein SAUSA300_1870 of Staphylococcus aureus (strain USA300).